Reading from the N-terminus, the 155-residue chain is Large ribosomal subunit protein uL11 (155 aa).

The protein belongs to the universal ribosomal protein uL11 family. Part of the ribosomal stalk of the 50S ribosomal subunit. Interacts with L10 and the large rRNA to form the base of the stalk. L10 forms an elongated spine to which L12 dimers bind in a sequential fashion forming a multimeric L10(L12)X complex. Post-translationally, one or more lysine residues are methylated.

Its function is as follows. Forms part of the ribosomal stalk which helps the ribosome interact with GTP-bound translation factors. This Malacoplasma penetrans (strain HF-2) (Mycoplasma penetrans) protein is Large ribosomal subunit protein uL11.